The following is a 648-amino-acid chain: Probable potassium transport system protein Kup 1 (648 aa).

The next 12 helical transmembrane spans lie at 25–45 (LTLG…IYAF), 57–77 (IVAG…ILVV), 113–133 (LVMA…VITP), 153–173 (SVSR…LFLM), 184–204 (LFGP…LIHI), 219–239 (GVLF…AVFL), 263–283 (WLAI…AFAL), 312–332 (IPLV…VITG), 362–382 (IYLP…VLGF), 391–411 (AYGV…FLVV), 417–437 (WGWP…LFFF), and 446–466 (EGGW…VTWV).

Belongs to the HAK/KUP transporter (TC 2.A.72) family.

Its subcellular location is the cell inner membrane. It carries out the reaction K(+)(in) + H(+)(in) = K(+)(out) + H(+)(out). Functionally, transport of potassium into the cell. Likely operates as a K(+):H(+) symporter. The sequence is that of Probable potassium transport system protein Kup 1 from Rhizorhabdus wittichii (strain DSM 6014 / CCUG 31198 / JCM 15750 / NBRC 105917 / EY 4224 / RW1) (Sphingomonas wittichii).